The following is a 293-amino-acid chain: Aquaporin-6 (293 aa).

Over 1–22 (MEPGLCSRAYLLVGGLWTAISK) the chain is Cytoplasmic. The chain crosses the membrane as a helical span at residues 23–43 (ALFAEFLATGLYVFFGVGSVL). Over 44 to 51 (PWPVALPS) the chain is Extracellular. The helical transmembrane segment at 52-70 (VLQIAITFNLATATAVQIS) threads the bilayer. The Cytoplasmic segment spans residues 71-75 (WKTSG). An intramembrane region (discontinuously helical) is located at residues 76-85 (AHANPAVTLA). Positions 79 to 81 (NPA) match the NPA 1 motif. Over 86 to 96 (YLVGSHISLPR) the chain is Cytoplasmic. A helical membrane pass occupies residues 97 to 118 (AMAYIAAQLAGATAGAALLYGV). At 119–138 (TPGGIRETLGVNVVHNSTST) the chain is on the extracellular side. N134 carries N-linked (GlcNAc...) asparagine glycosylation. The helical transmembrane segment at 139–159 (GQAVAVELVLTLQLVLCVFAS) threads the bilayer. The Cytoplasmic portion of the chain corresponds to 160–165 (MDGRQT). Residues 166–185 (LASPAAMIGTSVALGHLIGI) form a helical membrane-spanning segment. Residues 186-189 (YFTG) are Extracellular-facing. Positions 190–202 (CSMNPARSFGPAV) form an intramembrane region, discontinuously helical. Residues 193–195 (NPA) carry the NPA 2 motif. At 203-210 (IVGKFAVH) the chain is on the extracellular side. Residues 211-231 (WIFWVGPLTGAVLASLIYNFI) form a helical membrane-spanning segment. The Cytoplasmic portion of the chain corresponds to 232–293 (LFPDTKTVAQ…RSFSFTLGLC (62 aa)).

Belongs to the MIP/aquaporin (TC 1.A.8) family. In terms of assembly, homotetramer; each monomer provides an independent solute pore.

Its subcellular location is the cytoplasmic vesicle membrane. The enzyme catalyses nitrate(in) = nitrate(out). It carries out the reaction iodide(out) = iodide(in). It catalyses the reaction bromide(in) = bromide(out). The catalysed reaction is chloride(in) = chloride(out). The enzyme catalyses Na(+)(in) = Na(+)(out). It carries out the reaction H2O(in) = H2O(out). It catalyses the reaction CO2(out) = CO2(in). The catalysed reaction is NH4(+)(in) = NH4(+)(out). Functionally, aquaporins form homotetrameric transmembrane channels, with each monomer independently mediating water transport across the plasma membrane along its osmotic gradient. Unlike classical aquaporins, AQP6 is an intracellular channel with selective anion permeability, particularly for nitrate, and exhibits very low water permeability. It may also facilitate the transport of gases, such as CO2 and NH4(+), as demonstrated in vitro. The protein is Aquaporin-6 of Mus musculus (Mouse).